Here is a 352-residue protein sequence, read N- to C-terminus: Putative killer cell immunoglobulin-like receptor-like protein KIR3DX1 (352 aa).

The first 16 residues, 1-16 (MAPKLITVLCLGFCLN), serve as a signal peptide directing secretion. Ig-like C2-type domains are found at residues 17 to 112 (QKIC…NSLK) and 224 to 311 (PSLS…VTRC). 2 cysteine pairs are disulfide-bonded: Cys49/Cys94 and Cys244/Cys295. Asn78 carries an N-linked (GlcNAc...) asparagine glycan.

In terms of tissue distribution, expressed in NK-cells.

The protein resides in the secreted. This chain is Putative killer cell immunoglobulin-like receptor-like protein KIR3DX1 (KIR3DX1), found in Homo sapiens (Human).